The following is a 286-amino-acid chain: Bifunctional protein FolD (286 aa).

Residues 165 to 167 and Ser190 contribute to the NADP(+) site; that span reads GRS.

The protein belongs to the tetrahydrofolate dehydrogenase/cyclohydrolase family. Homodimer.

The enzyme catalyses (6R)-5,10-methylene-5,6,7,8-tetrahydrofolate + NADP(+) = (6R)-5,10-methenyltetrahydrofolate + NADPH. It catalyses the reaction (6R)-5,10-methenyltetrahydrofolate + H2O = (6R)-10-formyltetrahydrofolate + H(+). Its pathway is one-carbon metabolism; tetrahydrofolate interconversion. Its function is as follows. Catalyzes the oxidation of 5,10-methylenetetrahydrofolate to 5,10-methenyltetrahydrofolate and then the hydrolysis of 5,10-methenyltetrahydrofolate to 10-formyltetrahydrofolate. The protein is Bifunctional protein FolD of Paraburkholderia phytofirmans (strain DSM 17436 / LMG 22146 / PsJN) (Burkholderia phytofirmans).